We begin with the raw amino-acid sequence, 365 residues long: S-adenosylmethionine:tRNA ribosyltransferase-isomerase (365 aa).

It belongs to the QueA family. In terms of assembly, monomer.

It localises to the cytoplasm. The catalysed reaction is 7-aminomethyl-7-carbaguanosine(34) in tRNA + S-adenosyl-L-methionine = epoxyqueuosine(34) in tRNA + adenine + L-methionine + 2 H(+). Its pathway is tRNA modification; tRNA-queuosine biosynthesis. Its function is as follows. Transfers and isomerizes the ribose moiety from AdoMet to the 7-aminomethyl group of 7-deazaguanine (preQ1-tRNA) to give epoxyqueuosine (oQ-tRNA). The protein is S-adenosylmethionine:tRNA ribosyltransferase-isomerase of Helicobacter hepaticus (strain ATCC 51449 / 3B1).